Reading from the N-terminus, the 252-residue chain is uncharacterized protein (252 aa).

2 stretches are compositionally biased toward polar residues: residues 108-122 (RTTM…SSSE) and 136-153 (MPNT…NSQS). The interval 108-252 (RTTMRQGRFP…LIWNDSSSSK (145 aa)) is disordered. Residues 154–172 (TEKEDAMYSKDNGFEDRSK) are compositionally biased toward basic and acidic residues. The segment covering 201–226 (VKSTDSAFSGQENSEAFPSRTSNLGS) has biased composition (polar residues).

The protein localises to the cytoplasm. Its subcellular location is the mitochondrion. It localises to the nucleus. This is an uncharacterized protein from Schizosaccharomyces pombe (strain 972 / ATCC 24843) (Fission yeast).